A 202-amino-acid chain; its full sequence is Riboflavin synthase (202 aa).

2 Lumazine-binding repeats span residues 1 to 101 and 102 to 198; these read MFTG…MGGH and LVFG…ARLA. 2,4-dihydroxypteridine is bound by residues 4-6, 47-49, 66-68, 105-107, Lys140, 149-151, and 163-168; these read GII, CLT, EAW, GHV, SLT, and LLIRHS.

Homotrimer.

It catalyses the reaction 2 6,7-dimethyl-8-(1-D-ribityl)lumazine + H(+) = 5-amino-6-(D-ribitylamino)uracil + riboflavin. It participates in cofactor biosynthesis; riboflavin biosynthesis; riboflavin from 2-hydroxy-3-oxobutyl phosphate and 5-amino-6-(D-ribitylamino)uracil: step 2/2. With respect to regulation, is inhibited by riboflavin. Product inhibition may be the major mechanism by which RS regulates its enzymatic activity in vivo. In terms of biological role, catalyzes the dismutation of two molecules of 6,7-dimethyl-8-ribityllumazine, resulting in the formation of riboflavin and 5-amino-6-(D-ribitylamino)uracil. In Brucella abortus (strain 2308), this protein is Riboflavin synthase.